The following is a 94-amino-acid chain: Integration host factor subunit beta (94 aa).

This sequence belongs to the bacterial histone-like protein family. In terms of assembly, heterodimer of an alpha and a beta chain.

Functionally, this protein is one of the two subunits of integration host factor, a specific DNA-binding protein that functions in genetic recombination as well as in transcriptional and translational control. This Escherichia fergusonii (strain ATCC 35469 / DSM 13698 / CCUG 18766 / IAM 14443 / JCM 21226 / LMG 7866 / NBRC 102419 / NCTC 12128 / CDC 0568-73) protein is Integration host factor subunit beta.